Reading from the N-terminus, the 210-residue chain is MYKNVFVIDHPLIQHKISLIRDENTGSKEFRELVEEIAMLMAYEVTRDLPLEEIEVKTPVAVAKTKVIAGKKLGIIPILRAGLGMVDGMLKLIPAAKVGHIGIYRDPETLKPVEYYCKLPSDIAERDLIVVDPMLATGGSACAAIHFLKERGAQNIKLVNLIAAPEGIEAVHRDHPEVPIYVASIDQGLNEHGYIVPGLGDAGDRLFGTK.

Residues arginine 80, arginine 105, and aspartate 132 to serine 140 contribute to the 5-phospho-alpha-D-ribose 1-diphosphate site. Uracil is bound by residues isoleucine 195 and glycine 200–alanine 202. Aspartate 201 serves as a coordination point for 5-phospho-alpha-D-ribose 1-diphosphate.

This sequence belongs to the UPRTase family. Mg(2+) serves as cofactor.

It catalyses the reaction UMP + diphosphate = 5-phospho-alpha-D-ribose 1-diphosphate + uracil. Its pathway is pyrimidine metabolism; UMP biosynthesis via salvage pathway; UMP from uracil: step 1/1. Its activity is regulated as follows. Allosterically activated by GTP. Its function is as follows. Catalyzes the conversion of uracil and 5-phospho-alpha-D-ribose 1-diphosphate (PRPP) to UMP and diphosphate. The chain is Uracil phosphoribosyltransferase from Thermoanaerobacter pseudethanolicus (strain ATCC 33223 / 39E) (Clostridium thermohydrosulfuricum).